We begin with the raw amino-acid sequence, 542 residues long: CTP synthase (542 aa).

Positions 1 to 265 are amidoligase domain; that stretch reads MTRYIFVTGG…DEIIVERFGL (265 aa). S13 lines the CTP pocket. S13 contacts UTP. ATP-binding positions include 14–19 and D71; that span reads SLGKGI. The Mg(2+) site is built by D71 and E139. CTP-binding positions include 146–148, 186–191, and K222; these read DIE and KTKPTQ. UTP contacts are provided by residues 186–191 and K222; that span reads KTKPTQ. A Glutamine amidotransferase type-1 domain is found at 290–541; the sequence is TIAMVGKYME…VRAALENAGG (252 aa). G351 provides a ligand contact to L-glutamine. Catalysis depends on C378, which acts as the Nucleophile; for glutamine hydrolysis. Residues 379-382, E402, and R469 each bind L-glutamine; that span reads LGLQ. Active-site residues include H514 and E516.

Belongs to the CTP synthase family. As to quaternary structure, homotetramer.

The catalysed reaction is UTP + L-glutamine + ATP + H2O = CTP + L-glutamate + ADP + phosphate + 2 H(+). It catalyses the reaction L-glutamine + H2O = L-glutamate + NH4(+). It carries out the reaction UTP + NH4(+) + ATP = CTP + ADP + phosphate + 2 H(+). The protein operates within pyrimidine metabolism; CTP biosynthesis via de novo pathway; CTP from UDP: step 2/2. Allosterically activated by GTP, when glutamine is the substrate; GTP has no effect on the reaction when ammonia is the substrate. The allosteric effector GTP functions by stabilizing the protein conformation that binds the tetrahedral intermediate(s) formed during glutamine hydrolysis. Inhibited by the product CTP, via allosteric rather than competitive inhibition. Functionally, catalyzes the ATP-dependent amination of UTP to CTP with either L-glutamine or ammonia as the source of nitrogen. Regulates intracellular CTP levels through interactions with the four ribonucleotide triphosphates. The chain is CTP synthase from Hahella chejuensis (strain KCTC 2396).